A 175-amino-acid polypeptide reads, in one-letter code: Probable chemoreceptor glutamine deamidase CheD (175 aa).

This sequence belongs to the CheD family.

It carries out the reaction L-glutaminyl-[protein] + H2O = L-glutamyl-[protein] + NH4(+). Its function is as follows. Probably deamidates glutamine residues to glutamate on methyl-accepting chemotaxis receptors (MCPs), playing an important role in chemotaxis. This chain is Probable chemoreceptor glutamine deamidase CheD, found in Jannaschia sp. (strain CCS1).